Reading from the N-terminus, the 1181-residue chain is C5a peptidase (1181 aa).

The first 31 residues, 1–31, serve as a signal peptide directing secretion; it reads MRKKQKLPFDKLAIALMSTSILLNAQSDIKA. Residues 33 to 52 are compositionally biased toward polar residues; the sequence is TVTEDTPATEQAVETPQPTA. The segment at 33–117 is disordered; it reads TVTEDTPATE…PSQVKTLQEK (85 aa). Over residues 70–81 the composition is skewed to acidic residues; the sequence is DDAEETIADDAN. A Peptidase S8 domain is found at 99-581; sequence KATIRDLNDP…AGAVDAKKAS (483 aa). Active-site charge relay system residues include aspartate 130, histidine 193, and serine 512. 4 stretches are compositionally biased toward basic and acidic residues: residues 1029 to 1054, 1061 to 1071, 1078 to 1088, and 1095 to 1107; these read EGHSNKPEQDGSDQAPDKKPETKPEQ, PDKKPETKPEQ, and PDKKPETKPEKDS. The tract at residues 1029–1150 is disordered; it reads EGHSNKPEQD…KDQLPTTNDK (122 aa). 5 tandem repeats follow at residues 1034-1050, 1051-1067, 1068-1084, 1085-1101, and 1102-1118. The interval 1034-1118 is 5 X 17 AA tandem repeats; sequence KPEQDGSDQA…GQTPGKTPQK (85 aa). Polar residues-rich tracts occupy residues 1109-1123 and 1137-1147; these read GQTPGKTPQKGQPSR and KASTKDQLPTT. The short motif at 1144–1148 is the LPXTG sorting signal element; that stretch reads LPTTN. At threonine 1147 the chain carries Pentaglycyl murein peptidoglycan amidated threonine. The propeptide at 1148–1181 is removed by sortase; sequence NDKDTNRLHLLKLVMTTFFLGLVAHIFKTKRTED.

The protein belongs to the peptidase S8 family. Cleaved by SpeB protease; leading to its degradation. Degradation by SpeB is probably strictly regulated to preserve integrity of C5a peptidase.

The protein localises to the secreted. It localises to the cell wall. It catalyses the reaction The primary cleavage site is at 67-His-|-Lys-68 in human C5a with a minor secondary cleavage site at 58-Ala-|-Ser-59.. Functionally, this virulence factor of S.pyogenes specifically cleaves the human serum chemotaxin C5a at '68-Lys-|-Asp-69' bond near its C-terminus, destroying its ability to serve as a chemoattractant. In Streptococcus pyogenes serotype M1, this protein is C5a peptidase (scpA).